The chain runs to 313 residues: 4-diphosphocytidyl-2-C-methyl-D-erythritol kinase (313 aa).

Lysine 10 is a catalytic residue. ATP is bound at residue 95–105 (PVTAGLGGGSS). The active site involves aspartate 136. Positions 289 to 313 (HPRVSPWRSPRSASSRSTRRSSRPT) are disordered. Over residues 292-304 (VSPWRSPRSASSR) the composition is skewed to low complexity.

It belongs to the GHMP kinase family. IspE subfamily.

It carries out the reaction 4-CDP-2-C-methyl-D-erythritol + ATP = 4-CDP-2-C-methyl-D-erythritol 2-phosphate + ADP + H(+). It participates in isoprenoid biosynthesis; isopentenyl diphosphate biosynthesis via DXP pathway; isopentenyl diphosphate from 1-deoxy-D-xylulose 5-phosphate: step 3/6. In terms of biological role, catalyzes the phosphorylation of the position 2 hydroxy group of 4-diphosphocytidyl-2C-methyl-D-erythritol. The polypeptide is 4-diphosphocytidyl-2-C-methyl-D-erythritol kinase (Anaeromyxobacter sp. (strain K)).